Reading from the N-terminus, the 954-residue chain is Glycine dehydrogenase (decarboxylating) (954 aa).

K706 is subject to N6-(pyridoxal phosphate)lysine.

This sequence belongs to the GcvP family. The glycine cleavage system is composed of four proteins: P, T, L and H. Requires pyridoxal 5'-phosphate as cofactor.

The catalysed reaction is N(6)-[(R)-lipoyl]-L-lysyl-[glycine-cleavage complex H protein] + glycine + H(+) = N(6)-[(R)-S(8)-aminomethyldihydrolipoyl]-L-lysyl-[glycine-cleavage complex H protein] + CO2. The glycine cleavage system catalyzes the degradation of glycine. The P protein binds the alpha-amino group of glycine through its pyridoxal phosphate cofactor; CO(2) is released and the remaining methylamine moiety is then transferred to the lipoamide cofactor of the H protein. The chain is Glycine dehydrogenase (decarboxylating) from Pseudomonas syringae pv. syringae (strain B728a).